The primary structure comprises 112 residues: MAAALARLGLRSVKQVRVQFCPFEKNVESTRTFLQAVSSEKVRSTNLNCSVIADVRHDGSEPCVDVLFGDGHRLIMRGAHLTAQEMLSAFASHIQARGAAASGDKPSASTGR.

This sequence belongs to the mitochondrion-specific ribosomal protein mL53 family. In terms of assembly, component of the mitochondrial ribosome large subunit (39S) which comprises a 16S rRNA and about 50 distinct proteins.

The protein localises to the mitochondrion. This is Large ribosomal subunit protein mL53 (MRPL53) from Bos taurus (Bovine).